A 397-amino-acid chain; its full sequence is Teichoic acid D-alanine hydrolase (397 aa).

An N-terminal signal peptide occupies residues 1 to 23 (MKFNKVKLVIHACVLLFIIISIA).

The protein localises to the cell membrane. The catalysed reaction is [(4-D-Ala)-(2-GlcNAc)-Rib-ol-P]n-[Gro-P]m-beta-D-ManNAc-(1-&gt;4)-alpha-D-GlcNAc-P-peptidoglycan + n H2O = [(2-GlcNAc)-Rib-ol-P]n-[Gro-P]m-beta-D-ManNAc-(1-&gt;4)-alpha-D-GlcNAc-P-peptidoglycan + n D-alanine.. Catalyzes the liberation of D-alanyl moieties present on wall teichoic acid (WTA) and lipoteichoic acid (LTA). Affects the methicillin resistance level and autolysis in the presence of Triton X-100 as well as the cell wall structure. This chain is Teichoic acid D-alanine hydrolase (fmtA), found in Staphylococcus aureus (strain Mu50 / ATCC 700699).